Here is a 209-residue protein sequence, read N- to C-terminus: MRDPIETVMNLVPMVVEQTNRGERAYDIFSRLLKERIIFVNGPVEDGMSMLVCAQLLFLEAENPKKEINMYINSPGGVVTSGMAIYDTMQFIRPPVSTLCMGQAASMGSLLLTAGATGHRYALPNARIMVHQPSGGFQGQASDIERHAQDIIKMKRRLNEIYVKHTGRDYDTIERTLDRDHFMTAQEALEFGLIDKVVEVRDVSADESK.

The Nucleophile role is filled by serine 106. Histidine 131 is an active-site residue.

The protein belongs to the peptidase S14 family. In terms of assembly, fourteen ClpP subunits assemble into 2 heptameric rings which stack back to back to give a disk-like structure with a central cavity, resembling the structure of eukaryotic proteasomes.

It localises to the cytoplasm. It carries out the reaction Hydrolysis of proteins to small peptides in the presence of ATP and magnesium. alpha-casein is the usual test substrate. In the absence of ATP, only oligopeptides shorter than five residues are hydrolyzed (such as succinyl-Leu-Tyr-|-NHMec, and Leu-Tyr-Leu-|-Tyr-Trp, in which cleavage of the -Tyr-|-Leu- and -Tyr-|-Trp bonds also occurs).. In terms of biological role, cleaves peptides in various proteins in a process that requires ATP hydrolysis. Has a chymotrypsin-like activity. Plays a major role in the degradation of misfolded proteins. The sequence is that of ATP-dependent Clp protease proteolytic subunit from Brucella suis biovar 1 (strain 1330).